A 114-amino-acid chain; its full sequence is T cell receptor beta variable 5-6 (114 aa).

An N-terminal signal peptide occupies residues 1 to 21 (MGPGLLCWALLCLLGAGLVDA). The Ig-like domain occupies 22–114 (GVTQSPTHLI…SALYLCASSL (93 aa)). Cysteine 42 and cysteine 110 form a disulfide bridge. Asparagine 90 is a glycosylation site (N-linked (GlcNAc...) asparagine).

As to quaternary structure, alpha-beta TR is a heterodimer composed of an alpha and beta chain; disulfide-linked. The alpha-beta TR is associated with the transmembrane signaling CD3 coreceptor proteins to form the TR-CD3 (TcR or TCR). The assembly of alpha-beta TR heterodimers with CD3 occurs in the endoplasmic reticulum where a single alpha-beta TR heterodimer associates with one CD3D-CD3E heterodimer, one CD3G-CD3E heterodimer and one CD247 homodimer forming a stable octameric structure. CD3D-CD3E and CD3G-CD3E heterodimers preferentially associate with TR alpha and TR beta chains, respectively. The association of the CD247 homodimer is the last step of TcR assembly in the endoplasmic reticulum and is required for transport to the cell surface.

It localises to the cell membrane. V region of the variable domain of T cell receptor (TR) beta chain that participates in the antigen recognition. Alpha-beta T cell receptors are antigen specific receptors which are essential to the immune response and are present on the cell surface of T lymphocytes. Recognize peptide-major histocompatibility (MH) (pMH) complexes that are displayed by antigen presenting cells (APC), a prerequisite for efficient T cell adaptive immunity against pathogens. Binding of alpha-beta TR to pMH complex initiates TR-CD3 clustering on the cell surface and intracellular activation of LCK that phosphorylates the ITAM motifs of CD3G, CD3D, CD3E and CD247 enabling the recruitment of ZAP70. In turn ZAP70 phosphorylates LAT, which recruits numerous signaling molecules to form the LAT signalosome. The LAT signalosome propagates signal branching to three major signaling pathways, the calcium, the mitogen-activated protein kinase (MAPK) kinase and the nuclear factor NF-kappa-B (NF-kB) pathways, leading to the mobilization of transcription factors that are critical for gene expression and essential for T cell growth and differentiation. The T cell repertoire is generated in the thymus, by V-(D)-J rearrangement. This repertoire is then shaped by intrathymic selection events to generate a peripheral T cell pool of self-MH restricted, non-autoaggressive T cells. Post-thymic interaction of alpha-beta TR with the pMH complexes shapes TR structural and functional avidity. The chain is T cell receptor beta variable 5-6 from Homo sapiens (Human).